The sequence spans 397 residues: MEIGTPLFEGSKKILLLGSGELGKEMAIEAQRMGLEVVALDRYDLAPAMHVAHRKYVVDMMNPNAIKAVVKRERPDAIIAEIEAINTDALIELESNGFRVVPNANAVKACMNRIELRRFAAEKLKLPTTKYAFAENEEEVKRACKDIGFPCLIKPEMSSSGHGHVLVNKIENVEEAYRESISHARGKSRRVIVEEFVKIDTELTVLTYRYHSNSDSIITKTIEPIEHKRPSYYYVESWHPSNVSQGVKETARGIAQKVAEELGGLGIYGVEIIVSGNRILFSEVAPRPHDTGLVTLASSDINEFQIHVRSAIGLPTPEVKLVSPAASHVILAQTENVWGPKFLNIEKAMEIPGVQVRLFGKPVTYEKRRMGVVLATGNSVEEALEKVRKASSIILVK.

Residues 21–22 (EL) and glutamate 81 each bind N(1)-(5-phospho-beta-D-ribosyl)glycinamide. ATP-binding positions include arginine 113, lysine 154, 194 to 197 (EEFV), and glutamate 202. An ATP-grasp domain is found at 118–312 (RFAAEKLKLP…EFQIHVRSAI (195 aa)). Residues glutamate 271 and glutamate 283 each contribute to the Mg(2+) site. N(1)-(5-phospho-beta-D-ribosyl)glycinamide contacts are provided by residues aspartate 290, lysine 361, and 368-369 (RR).

This sequence belongs to the PurK/PurT family. Homodimer.

The enzyme catalyses N(1)-(5-phospho-beta-D-ribosyl)glycinamide + formate + ATP = N(2)-formyl-N(1)-(5-phospho-beta-D-ribosyl)glycinamide + ADP + phosphate + H(+). Its pathway is purine metabolism; IMP biosynthesis via de novo pathway; N(2)-formyl-N(1)-(5-phospho-D-ribosyl)glycinamide from N(1)-(5-phospho-D-ribosyl)glycinamide (formate route): step 1/1. Its function is as follows. Involved in the de novo purine biosynthesis. Catalyzes the transfer of formate to 5-phospho-ribosyl-glycinamide (GAR), producing 5-phospho-ribosyl-N-formylglycinamide (FGAR). Formate is provided by PurU via hydrolysis of 10-formyl-tetrahydrofolate. This is Formate-dependent phosphoribosylglycinamide formyltransferase from Saccharolobus solfataricus (strain ATCC 35092 / DSM 1617 / JCM 11322 / P2) (Sulfolobus solfataricus).